The sequence spans 165 residues: MKNKLIAKSLLTLAAIGITTTTIASTADASEGYGPREKKPVSINHNIVEYNDGTFKYQSRPKFNSTPKYIKFKHDYNILEFNDGTFEYGARPQFNKPAAKTDATIKKEQKLIQAQNLVREFEKTHTVSAHRKAQKAVNLVSFEYKVKKMVLQERIDNVLKQGLVK.

An N-terminal signal peptide occupies residues methionine 1–alanine 29.

Interacts with host fibrinogen alpha chain/FGA. Interacts with host complement protein C3.

Its subcellular location is the secreted. Extracellular fibrinogen-binding protein that plays an important role in virulence. By interacting with the alpha chain of fibrinogen and its derivative fibrin, enhances a non-functional interaction between fibrinogen and platelets and is responsible for repression of fibrinogen-dependent platelet aggregation. In addition, assembles a fibrinogen protective shield around the bacteria which results in impaired phagocytic clearance by the host. Mechanistically, interacts with host complement C3b deposited on the surface of the bacterium via its C-terminal and then recruits fibrinogen via its N-terminal. In Staphylococcus aureus (strain Newman), this protein is Fibrinogen-binding protein (fib).